The primary structure comprises 766 residues: NADH-dependent flavin oxidoreductase iliE (766 aa).

Polar residues predominate over residues 1–13 (MSEQLGSHITTPS). Residues 1-24 (MSEQLGSHITTPSSHDDASKDKRP) are disordered. Residues 14–24 (SHDDASKDKRP) are compositionally biased toward basic and acidic residues. N-linked (GlcNAc...) asparagine glycosylation occurs at Asn-30. FMN is bound at residue 61–64 (AATA). N-linked (GlcNAc...) asparagine glycans are attached at residues Asn-70 and Asn-136. Gln-143 is an FMN binding site. A substrate-binding site is contributed by 224 to 227 (HAGH). 385–386 (AR) provides a ligand contact to FMN. The J domain occupies 551–622 (TPYDILAMRK…SKRSLYDTQG (72 aa)). N-linked (GlcNAc...) asparagine glycosylation is found at Asn-634, Asn-650, and Asn-654. The helical transmembrane segment at 675 to 695 (MYMSNGVFATLVVMMCMIGAF) threads the bilayer.

This sequence belongs to the NADH:flavin oxidoreductase/NADH oxidase family.

The protein localises to the membrane. Its function is as follows. NADH-dependent flavin oxidoreductase; part of the gene cluster that mediates the biosynthesis of ilicicolin H, a 4-hydroxy-2-pyridonealkaloid that has potent and broad antifungal activities by inhibiting the mitochondrial respiration chain. The biosynthesis of ilicicolin H starts with formation of the tetramic acid by the hybrid PKS-NRPS synthetase iliA with the partnering trans-enoyl reductase iliB since iliA lacks a designated enoylreductase (ER) domain. The cytochrome P450 monooxygenase iliC then catalyzes the ring expansion of the tetramate to the acyclic 2-pyridone. The pericyclase iliD further converts the acyclic 2-pyridone into 8-epi-ilicicolin H. 8-epi-ilicicolin H might then spontaneously convert to ilicicolin H since ilicicolin H is produced in the absence of the epimerase iliE, in contrast to what was observed for the Talaromyces variabilis ilicolin H biosynthetic pathway. The polypeptide is NADH-dependent flavin oxidoreductase iliE (Neonectria sp. (strain DH2)).